A 649-amino-acid chain; its full sequence is Replication factor C small subunit (649 aa).

55–385 provides a ligand contact to ATP; sequence GPAGVGKCVT…GCIPTVMHNT (331 aa).

Belongs to the activator 1 small subunits family. RfcS subfamily. Heteromultimer composed of small subunits (RfcS) and large subunits (RfcL). Post-translationally, this protein undergoes a protein self splicing that involves a post-translational excision of the intervening region (intein) followed by peptide ligation.

Part of the RFC clamp loader complex which loads the PCNA sliding clamp onto DNA. This Haloquadratum walsbyi (strain DSM 16790 / HBSQ001) protein is Replication factor C small subunit (rfcS).